We begin with the raw amino-acid sequence, 206 residues long: Accelerated cell death 11 (206 aa).

An N-acylsphingoid base 1-phosphate contacts are provided by Asp60, Lys64, Arg99, Arg103, and His143.

This sequence belongs to the GLTP family. As to quaternary structure, interacts with BPA1, PRA1F2 and PRA1F3.

The protein localises to the cytoplasm. Its function is as follows. Exhibits selective intermembrane transfer of ceramide-1-phosphate (C1P) and phytoceramide-1-phosphate. Does not transport ceramide (Cer) or GalCer, suggesting a requirement for phosphate in the headgroup for functionality. Transports in vitro sphingosine, but not glycosphingolipids. Also has some in vitro activity with sphingomyelin, a lipid not detected in plant tissues. The transport function may be not directly involved in regulating cell death. Rather, perturbations in the function of ACD11 or related components could be monitored by R-proteins, which then mediate defense and programmed cell death (PCD), as proposed in the guard hypothesis. C1P transfer is stimulated by phosphatidylserine in C1P source vesicles. Regulates autophagy, inflammasome mediated IL1B and IL18 processing, and pyroptosis, but not apoptosis. In Arabidopsis thaliana (Mouse-ear cress), this protein is Accelerated cell death 11.